The chain runs to 122 residues: Small ribosomal subunit protein uS13 (122 aa).

The interval 99 to 122 (RGQRTHTNARTRKGPAKAIAGKKK) is disordered.

Belongs to the universal ribosomal protein uS13 family. Part of the 30S ribosomal subunit. Forms a loose heterodimer with protein S19. Forms two bridges to the 50S subunit in the 70S ribosome.

Its function is as follows. Located at the top of the head of the 30S subunit, it contacts several helices of the 16S rRNA. In the 70S ribosome it contacts the 23S rRNA (bridge B1a) and protein L5 of the 50S subunit (bridge B1b), connecting the 2 subunits; these bridges are implicated in subunit movement. Contacts the tRNAs in the A and P-sites. The sequence is that of Small ribosomal subunit protein uS13 from Bradyrhizobium sp. (strain ORS 278).